Reading from the N-terminus, the 360-residue chain is Phenylalanine--tRNA ligase alpha subunit (360 aa).

Glu-260 is a binding site for Mg(2+).

The protein belongs to the class-II aminoacyl-tRNA synthetase family. Phe-tRNA synthetase alpha subunit type 1 subfamily. Tetramer of two alpha and two beta subunits. Mg(2+) is required as a cofactor.

It is found in the cytoplasm. It carries out the reaction tRNA(Phe) + L-phenylalanine + ATP = L-phenylalanyl-tRNA(Phe) + AMP + diphosphate + H(+). The polypeptide is Phenylalanine--tRNA ligase alpha subunit (Rhizobium rhizogenes (strain K84 / ATCC BAA-868) (Agrobacterium radiobacter)).